The primary structure comprises 308 residues: Ribosomal RNA small subunit methyltransferase H (308 aa).

S-adenosyl-L-methionine is bound by residues 36 to 38 (GGH), D55, F82, D103, and Q110.

It belongs to the methyltransferase superfamily. RsmH family.

It is found in the cytoplasm. It catalyses the reaction cytidine(1402) in 16S rRNA + S-adenosyl-L-methionine = N(4)-methylcytidine(1402) in 16S rRNA + S-adenosyl-L-homocysteine + H(+). In terms of biological role, specifically methylates the N4 position of cytidine in position 1402 (C1402) of 16S rRNA. The polypeptide is Ribosomal RNA small subunit methyltransferase H (Helicobacter pylori (strain ATCC 700392 / 26695) (Campylobacter pylori)).